The primary structure comprises 95 residues: Protein TusB (95 aa).

It belongs to the DsrH/TusB family. Heterohexamer, formed by a dimer of trimers. The hexameric TusBCD complex contains 2 copies each of TusB, TusC and TusD. The TusBCD complex interacts with TusE.

The protein resides in the cytoplasm. Its function is as follows. Part of a sulfur-relay system required for 2-thiolation of 5-methylaminomethyl-2-thiouridine (mnm(5)s(2)U) at tRNA wobble positions. This Buchnera aphidicola subsp. Acyrthosiphon pisum (strain 5A) protein is Protein TusB.